The sequence spans 556 residues: Cytochrome P450 4g1 (556 aa).

Heme-binding residues include E356 and C497.

The protein belongs to the cytochrome P450 family. Heme serves as cofactor.

It is found in the endoplasmic reticulum membrane. Its subcellular location is the microsome membrane. Its function is as follows. May be involved in the metabolism of insect hormones and in the breakdown of synthetic insecticides. This Drosophila melanogaster (Fruit fly) protein is Cytochrome P450 4g1 (Cyp4g1).